Reading from the N-terminus, the 207-residue chain is Uracil phosphoribosyltransferase (207 aa).

5-phospho-alpha-D-ribose 1-diphosphate is bound by residues arginine 77, arginine 102, and 129-137 (DPMLATGGS). Uracil is bound by residues isoleucine 192 and 197–199 (GDA). Residue aspartate 198 coordinates 5-phospho-alpha-D-ribose 1-diphosphate.

This sequence belongs to the UPRTase family. It depends on Mg(2+) as a cofactor.

The catalysed reaction is UMP + diphosphate = 5-phospho-alpha-D-ribose 1-diphosphate + uracil. Its pathway is pyrimidine metabolism; UMP biosynthesis via salvage pathway; UMP from uracil: step 1/1. Allosterically activated by GTP. In terms of biological role, catalyzes the conversion of uracil and 5-phospho-alpha-D-ribose 1-diphosphate (PRPP) to UMP and diphosphate. This is Uracil phosphoribosyltransferase from Nocardia farcinica (strain IFM 10152).